The chain runs to 333 residues: MRILAIETSCDETAAAIVEDGRRALADVISTQIDIHRRWGGVVPELASRNHVVQVMPVVDEALSRAGVGPDGLDAIAVTSGPGLVGALLVGVQAAKALALAWQKPLVRVNHLEGHLVAAFLSETAPAFPYLGLVVSGGHTSLYAAHGFGDYRLLGQTRDDAAGEAFDKGAKLLGLPYPGGVAIDRLAKEGDARAIRFPKAIVKGADLDFSFSGLKTALLHHVKKHGLPEGKGLADLCASYQEAIVRALVEKAFRAARRLQYDRLVLSGGVAANSRLRGAVAERAREYEGMEVFLPAPRLCTDNAAMIAVAGTHAFLRGERAGADLNADPAWRL.

Positions 111 and 115 each coordinate Fe cation. Substrate contacts are provided by residues 134 to 138 (VVSGG), aspartate 167, glycine 180, aspartate 184, and asparagine 273. Aspartate 302 contributes to the Fe cation binding site.

This sequence belongs to the KAE1 / TsaD family. Fe(2+) serves as cofactor.

It localises to the cytoplasm. The enzyme catalyses L-threonylcarbamoyladenylate + adenosine(37) in tRNA = N(6)-L-threonylcarbamoyladenosine(37) in tRNA + AMP + H(+). Its function is as follows. Required for the formation of a threonylcarbamoyl group on adenosine at position 37 (t(6)A37) in tRNAs that read codons beginning with adenine. Is involved in the transfer of the threonylcarbamoyl moiety of threonylcarbamoyl-AMP (TC-AMP) to the N6 group of A37, together with TsaE and TsaB. TsaD likely plays a direct catalytic role in this reaction. The sequence is that of tRNA N6-adenosine threonylcarbamoyltransferase from Anaeromyxobacter sp. (strain Fw109-5).